The following is a 2885-amino-acid chain: Chromodomain-helicase-DNA-binding protein 9 (2885 aa).

The segment at 173 to 195 (QCSSLHSQQSRSNLNPGQNSLGQ) is disordered. Residue lysine 197 forms a Glycyl lysine isopeptide (Lys-Gly) (interchain with G-Cter in SUMO2) linkage. Disordered regions lie at residues 242 to 263 (CSSH…CSVS), 283 to 347 (SLLQ…QGNY), and 479 to 677 (CLQR…QPLQ). Polar residues-rich tracts occupy residues 243 to 263 (SSHQ…CSVS) and 283 to 310 (SLLQ…NSFS). Residues 323 to 334 (LLNPTPSLNSNN) are compositionally biased toward low complexity. Polar residues-rich tracts occupy residues 335–347 (FQIL…QGNY) and 483–505 (QPPS…TQVR). At lysine 498 the chain carries N6-acetyllysine. Composition is skewed to basic and acidic residues over residues 507–526 (MSEK…EKAN) and 534–544 (ARAKERGERNI). Position 549 is a phosphoserine (serine 549). Over residues 572 to 592 (KPKDRDNKKPKTYSKLKEKTK) the composition is skewed to basic and acidic residues. Lysine 595 is covalently cross-linked (Glycyl lysine isopeptide (Lys-Gly) (interchain with G-Cter in SUMO2)). Serine 610 carries the post-translational modification Phosphoserine. A compositionally biased stretch (basic and acidic residues) spans 617–630 (AEQRSQHTFKEQHS). A compositionally biased stretch (basic residues) spans 631-643 (QKRRSNRQIKRKK). The segment covering 644-659 (YAEDAEGKQSEEEVKG) has biased composition (basic and acidic residues). 2 consecutive Chromo domains span residues 689 to 760 (AIVD…HFLA) and 772 to 838 (VEVD…HLDR). Positions 867–871 (LNWLL) match the LXXLL motif 1 motif. The Helicase ATP-binding domain occupies 871-1045 (LFNWYNRRNC…FSLLHFLEPL (175 aa)). 884–891 (DEMGLGKT) provides a ligand contact to ATP. The short motif at 996–999 (DEAH) is the DEAH box element. The short motif at 1035-1039 (LFSLL) is the LXXLL motif 2 element. The Helicase C-terminal domain maps to 1185–1336 (LIDKLLPKMK…KAVLQSMSGR (152 aa)). The segment at 1460 to 1484 (KDELAELSEAESEGEEKPKLRRPCD) is disordered. Over residues 1464–1473 (AELSEAESEG) the composition is skewed to acidic residues. Serine 1467 and serine 1471 each carry phosphoserine. Over residues 1474-1484 (EEKPKLRRPCD) the composition is skewed to basic and acidic residues. Residues lysine 1587, lysine 1737, and lysine 1902 each participate in a glycyl lysine isopeptide (Lys-Gly) (interchain with G-Cter in SUMO2) cross-link. Phosphoserine is present on serine 2025. An LXXLL motif 3 motif is present at residues 2030–2034 (LPRLL). A Glycyl lysine isopeptide (Lys-Gly) (interchain with G-Cter in SUMO2) cross-link involves residue lysine 2037. The tract at residues 2046-2238 (VKSESLTEEP…TQDSFQANNG (193 aa)) is disordered. Phosphoserine is present on residues serine 2057 and serine 2058. A Glycyl lysine isopeptide (Lys-Gly) (interchain with G-Cter in SUMO2) cross-link involves residue lysine 2073. Phosphoserine occurs at positions 2074 and 2078. The segment covering 2083–2092 (VLSQATGDQK) has biased composition (polar residues). Over residues 2093–2103 (SGGKSETDRRM) the composition is skewed to basic and acidic residues. Residues 2127 to 2193 (SQSSSDSDSD…SSSSSSSSSS (67 aa)) show a composition bias toward low complexity. A compositionally biased stretch (basic and acidic residues) spans 2201–2215 (DVQKREGTPHRKAYD). The segment covering 2220–2238 (ASLSTTQDETQDSFQANNG) has biased composition (polar residues). Residues 2331–2471 (QMSKVKKHVR…LSYPQPQRIP (141 aa)) form a binds A/T-rich DNA region. Residues lysine 2349, lysine 2355, and lysine 2360 each participate in a glycyl lysine isopeptide (Lys-Gly) (interchain with G-Cter in SUMO2) cross-link. Residues 2428–2435 (KKRRGRRR) form an a.T hook-like region. A disordered region spans residues 2473–2494 (TESPVPVINLKDGTRLAGDDAP). The span at 2484–2494 (DGTRLAGDDAP) shows a compositional bias: basic and acidic residues. The short motif at 2710–2714 (LPNLL) is the LXXLL motif 4 element. Residues 2724–2770 (AESGAEEKRGNDSKELEGKKERTESQSPENGGERCVPGSPSTSSTAA) form a disordered region. A compositionally biased stretch (basic and acidic residues) spans 2728 to 2747 (AEEKRGNDSKELEGKKERTE). The short motif at 2782–2786 (LNPLL) is the LXXLL motif 5 element. Basic and acidic residues predominate over residues 2818–2847 (KNKSDDLDSSKSVEIKEENSRVRDQEEKGG). The interval 2818–2885 (KNKSDDLDSS…SEDSDSSNED (68 aa)) is disordered. A Glycyl lysine isopeptide (Lys-Gly) (interchain with G-Cter in SUMO2) cross-link involves residue lysine 2833. The segment covering 2864–2876 (RASSGSDSSSSSS) has biased composition (low complexity).

It belongs to the SNF2/RAD54 helicase family. Interacts with PPARA. Probably interacts with ESR1 and NR1I3. Post-translationally, phosphorylated on serine and tyrosine residues. Expressed in osteoprogenitor cells during development and in mature bone (at protein level).

It is found in the cytoplasm. Its subcellular location is the nucleus. It carries out the reaction ATP + H2O = ADP + phosphate + H(+). Probable ATP-dependent chromatin-remodeling factor. Acts as a transcriptional coactivator for PPARA and possibly other nuclear receptors. Has DNA-dependent ATPase activity and binds to A/T-rich DNA. Associates with A/T-rich regulatory regions in promoters of genes that participate in the differentiation of progenitors during osteogenesis. The sequence is that of Chromodomain-helicase-DNA-binding protein 9 (Chd9) from Mus musculus (Mouse).